Reading from the N-terminus, the 210-residue chain is Fimbriae Z protein (210 aa).

The Response regulatory domain maps to S5–L121. D56 is modified (4-aspartylphosphate). In terms of domain architecture, HTH luxR-type spans G143–E208. A DNA-binding region (H-T-H motif) is located at residues N167–A186.

It is found in the cytoplasm. The chain is Fimbriae Z protein (fimZ) from Salmonella typhimurium (strain LT2 / SGSC1412 / ATCC 700720).